Reading from the N-terminus, the 518-residue chain is MTAYKPYRHQLRRSLFASTIFPVFLVIIIGLVSFYAIYIWIEHRTIHQHVDESQSSLHHTEKQIQTFITQHNNSFQELDLTNHHDVTATKRELLKLIHQQPATLYYELSGPNQFITNNYEHLNTKNMYLFSTHQLKFKNSTYMLKIYIANTPRLSEIKKDSRQFALIVDQYDNILYANDDRFTIGEKYRPQQFGFMNESVKLNHADHRLIIYKDIHENIEDGITLLIVMAVVLVLLVIFGFISADNMAKRQTKDIETIIQKIYYAKNRHLGTYTPLKNNSELEEINNYIYDLFESNEQLIHSIEHTERRLRDIQLKEIERQFQPHFLFNTMQTIQYLITLSPKLAQTVVQQLSQMLRYSLRTNSHTVELNEELNYIEQYVAIQNIRFDDMIKLHIESSEEARHQTIGKMMLQPLIENAIKHGRDTESLDITIRLTLARQNLHVLVCDNGIGMSSSRLQYVRQSLNNDVFDTKHLGLNHLHNKAMIQYGSHARLHIFSKRNQGTLICYKIPLSRGNVDV.

A run of 2 helical transmembrane segments spans residues 20–40 (IFPV…IYIW) and 222–242 (GITL…FGFI). The Histidine kinase domain occupies 297–513 (EQLIHSIEHT…LICYKIPLSR (217 aa)). At His325 the chain carries Phosphohistidine; by autocatalysis.

Autophosphorylated.

It localises to the cell membrane. The catalysed reaction is ATP + protein L-histidine = ADP + protein N-phospho-L-histidine.. In terms of biological role, member of the two-component regulatory system HptS/HptR that regulates genes involved in hexose phosphate transport system in response to changes in extracellular phosphate sources. May act as a sensor protein kinase which is autophosphorylated at a histidine residue and transfers its phosphate group to the conserved aspartic acid residue in the regulatory domain of HptS. In turn, HptS antagonizes CcpA-dependent transcription of a subset of CcpA-regulated genes involved in antibiotic susceptibility. The chain is Sensor protein kinase HptS (hptS) from Staphylococcus aureus (strain MRSA252).